The primary structure comprises 740 residues: Ion-translocating oxidoreductase complex subunit C (740 aa).

4Fe-4S ferredoxin-type domains follow at residues 369 to 397 (GEPQ…QQLY) and 407 to 436 (KATT…VQYF). [4Fe-4S] cluster contacts are provided by C377, C380, C383, C387, C416, C419, C422, and C426. Residues 602 to 716 (KLEQQQANAE…EPEEQVDPRK (115 aa)) are disordered.

The protein belongs to the 4Fe4S bacterial-type ferredoxin family. RnfC subfamily. As to quaternary structure, the complex is composed of six subunits: RsxA, RsxB, RsxC, RsxD, RsxE and RsxG. It depends on [4Fe-4S] cluster as a cofactor.

The protein localises to the cell inner membrane. Its function is as follows. Part of a membrane-bound complex that couples electron transfer with translocation of ions across the membrane. Required to maintain the reduced state of SoxR. This chain is Ion-translocating oxidoreductase complex subunit C, found in Escherichia coli O139:H28 (strain E24377A / ETEC).